A 149-amino-acid chain; its full sequence is MKQVDIKLFDPRLKDCFPGYATPGSAGLDLRACIDERTEIHPGETLLIPSGIAIHLANPGFAAVVLPRSGLGHKHGIVLGNLVGLIDSDYQGQILVSCWNRGQTTFALEPLERIAQLVIVPVIQASFNVVNDFQHSQRGERGFGSTGKC.

Residues 68 to 70, N81, and 85 to 87 contribute to the substrate site; these read RSG and LID.

The protein belongs to the dUTPase family. The cofactor is Mg(2+).

It catalyses the reaction dUTP + H2O = dUMP + diphosphate + H(+). The protein operates within pyrimidine metabolism; dUMP biosynthesis; dUMP from dCTP (dUTP route): step 2/2. This enzyme is involved in nucleotide metabolism: it produces dUMP, the immediate precursor of thymidine nucleotides and it decreases the intracellular concentration of dUTP so that uracil cannot be incorporated into DNA. The polypeptide is Deoxyuridine 5'-triphosphate nucleotidohydrolase (Nitrosomonas eutropha (strain DSM 101675 / C91 / Nm57)).